Reading from the N-terminus, the 335-residue chain is Methionine import ATP-binding protein MetN 2 (335 aa).

Residues 2 to 242 (IEFHNVHKTY…PQHSTTKRFV (241 aa)) enclose the ABC transporter domain. Residue 38 to 45 (GHSGAGKS) participates in ATP binding.

Belongs to the ABC transporter superfamily. Methionine importer (TC 3.A.1.24) family. As to quaternary structure, the complex is composed of two ATP-binding proteins (MetN), two transmembrane proteins (MetI) and a solute-binding protein (MetQ).

It localises to the cell inner membrane. The catalysed reaction is L-methionine(out) + ATP + H2O = L-methionine(in) + ADP + phosphate + H(+). The enzyme catalyses D-methionine(out) + ATP + H2O = D-methionine(in) + ADP + phosphate + H(+). Functionally, part of the ABC transporter complex MetNIQ involved in methionine import. Responsible for energy coupling to the transport system. In Pseudomonas syringae pv. tomato (strain ATCC BAA-871 / DC3000), this protein is Methionine import ATP-binding protein MetN 2.